We begin with the raw amino-acid sequence, 343 residues long: Flap endonuclease 1 (343 aa).

The N-domain stretch occupies residues 1–98 (MGVPIGELIP…KELEKRREAR (98 aa)). Mg(2+) contacts are provided by D27, D80, E152, E154, D173, D175, and D236. Residues 116–258 (EARKYAQRAT…KALEIVKYSK (143 aa)) form an I-domain region. An interaction with PCNA region spans residues 330–338 (KQSTLESWF).

Belongs to the XPG/RAD2 endonuclease family. FEN1 subfamily. As to quaternary structure, interacts with PCNA. PCNA stimulates the nuclease activity without altering cleavage specificity. The cofactor is Mg(2+).

Functionally, structure-specific nuclease with 5'-flap endonuclease and 5'-3' exonuclease activities involved in DNA replication and repair. During DNA replication, cleaves the 5'-overhanging flap structure that is generated by displacement synthesis when DNA polymerase encounters the 5'-end of a downstream Okazaki fragment. Binds the unpaired 3'-DNA end and kinks the DNA to facilitate 5' cleavage specificity. Cleaves one nucleotide into the double-stranded DNA from the junction in flap DNA, leaving a nick for ligation. Also involved in the base excision repair (BER) pathway. Acts as a genome stabilization factor that prevents flaps from equilibrating into structures that lead to duplications and deletions. Also possesses 5'-3' exonuclease activity on nicked or gapped double-stranded DNA. In Pyrococcus abyssi (strain GE5 / Orsay), this protein is Flap endonuclease 1.